Here is a 143-residue protein sequence, read N- to C-terminus: uncharacterized protein (143 aa).

Positions 1–27 (MSDEIARLVADVFELAGLLRRSGEVVA) are cleaved as a signal peptide.

This is an uncharacterized protein from Mycobacterium tuberculosis (strain CDC 1551 / Oshkosh).